A 50-amino-acid polypeptide reads, in one-letter code: Basic phospholipase A2 Bmaj-9 (50 aa).

Ca(2+) is bound by residues Y27, G29, and G31. Cysteines 28 and 45 form a disulfide. H48 is a catalytic residue. D49 serves as a coordination point for Ca(2+).

Belongs to the phospholipase A2 family. Group II subfamily. D49 sub-subfamily. Ca(2+) serves as cofactor. Expressed by the venom gland.

Its subcellular location is the secreted. The catalysed reaction is a 1,2-diacyl-sn-glycero-3-phosphocholine + H2O = a 1-acyl-sn-glycero-3-phosphocholine + a fatty acid + H(+). Functionally, snake venom phospholipase A2 (PLA2) that causes irreversible neuromuscular blockade in chick biventer cervicis muscle preparations. The neuromuscular blockade is mediated by inhibitory action at the presynaptic motor nerve endings. PLA2 catalyzes the calcium-dependent hydrolysis of the 2-acyl groups in 3-sn-phosphoglycerides. The protein is Basic phospholipase A2 Bmaj-9 of Bothrops marajoensis (Marajo lancehead).